The following is a 151-amino-acid chain: Putative olfactory receptor 13C6 (151 aa).

Over 1–27 the chain is Extracellular; that stretch reads MVSANQTASVTEFILLGLSAHPKLEKT. N-linked (GlcNAc...) asparagine glycosylation occurs at Asn-5. A helical membrane pass occupies residues 28-48; the sequence is FFVLILLMYLVILLGNGVLIL. Residues 49–61 lie on the Cytoplasmic side of the membrane; that stretch reads MTVSNSHLHMPMY. A helical membrane pass occupies residues 62–82; that stretch reads FFLGNLSFLDICYTTSSVPLI. Residues 83–100 are Extracellular-facing; the sequence is LDSFLTPRKTISFSACAV. The helical transmembrane segment at 101–121 threads the bilayer; that stretch reads QMFLSFAMGATECVLLSMMAF.

It belongs to the G-protein coupled receptor 1 family.

It is found in the cell membrane. Functionally, odorant receptor. This Homo sapiens (Human) protein is Putative olfactory receptor 13C6.